Consider the following 178-residue polypeptide: Beta-lytic metalloendopeptidase (178 aa).

C65 and C111 are disulfide-bonded. Zn(2+)-binding residues include H120 and H122. A disulfide bridge connects residues C155 and C168.

It belongs to the peptidase M23A family. Zn(2+) is required as a cofactor.

It carries out the reaction Cleavage of N-acetylmuramoyl-|-Ala, and of the insulin B chain at 23-Gly-|-Phe-24 &gt; 18-Val-|-Cys(SO3H).. This is Beta-lytic metalloendopeptidase from Lysobacter enzymogenes.